A 436-amino-acid chain; its full sequence is 3-ketoacyl-CoA thiolase (436 aa).

The active-site Acyl-thioester intermediate is the Cys99. Catalysis depends on proton acceptor residues His392 and Cys422.

The protein belongs to the thiolase-like superfamily. Thiolase family. Heterotetramer of two alpha chains (FadJ) and two beta chains (FadI).

The protein localises to the cytoplasm. The catalysed reaction is an acyl-CoA + acetyl-CoA = a 3-oxoacyl-CoA + CoA. It functions in the pathway lipid metabolism; fatty acid beta-oxidation. In terms of biological role, catalyzes the final step of fatty acid oxidation in which acetyl-CoA is released and the CoA ester of a fatty acid two carbons shorter is formed. In Cronobacter sakazakii (strain ATCC BAA-894) (Enterobacter sakazakii), this protein is 3-ketoacyl-CoA thiolase.